The sequence spans 114 residues: Large ribosomal subunit protein P2 (114 aa).

Positions 74–83 (AAAAGGGGGD) are enriched in gly residues. A disordered region spans residues 74-114 (AAAAGGGGGDAPAAAAEEPKKEEKSEEESDEELGFSLFDDN). Acidic residues predominate over residues 98 to 114 (SEEESDEELGFSLFDDN).

It belongs to the eukaryotic ribosomal protein P1/P2 family. In terms of assembly, P1 and P2 exist as dimers at the large ribosomal subunit. In terms of processing, phosphorylated.

Functionally, plays an important role in the elongation step of protein synthesis. This chain is Large ribosomal subunit protein P2, found in Parthenium argentatum (Guayule rubber plant).